The sequence spans 249 residues: Leucyl/phenylalanyl-tRNA--protein transferase (249 aa).

This sequence belongs to the L/F-transferase family.

The protein localises to the cytoplasm. The enzyme catalyses N-terminal L-lysyl-[protein] + L-leucyl-tRNA(Leu) = N-terminal L-leucyl-L-lysyl-[protein] + tRNA(Leu) + H(+). The catalysed reaction is N-terminal L-arginyl-[protein] + L-leucyl-tRNA(Leu) = N-terminal L-leucyl-L-arginyl-[protein] + tRNA(Leu) + H(+). It carries out the reaction L-phenylalanyl-tRNA(Phe) + an N-terminal L-alpha-aminoacyl-[protein] = an N-terminal L-phenylalanyl-L-alpha-aminoacyl-[protein] + tRNA(Phe). In terms of biological role, functions in the N-end rule pathway of protein degradation where it conjugates Leu, Phe and, less efficiently, Met from aminoacyl-tRNAs to the N-termini of proteins containing an N-terminal arginine or lysine. The protein is Leucyl/phenylalanyl-tRNA--protein transferase of Cupriavidus metallidurans (strain ATCC 43123 / DSM 2839 / NBRC 102507 / CH34) (Ralstonia metallidurans).